The chain runs to 321 residues: Glucokinase (321 aa).

Position 8 to 13 (8 to 13 (GDVGGT)) interacts with ATP.

This sequence belongs to the bacterial glucokinase family.

The protein localises to the cytoplasm. It catalyses the reaction D-glucose + ATP = D-glucose 6-phosphate + ADP + H(+). In Shigella dysenteriae serotype 1 (strain Sd197), this protein is Glucokinase.